We begin with the raw amino-acid sequence, 182 residues long: Large ribosomal subunit protein bL17 (182 aa).

Residues 126 to 182 (ERANRVAASKAKKAEAEAAEAKAEEAEEAPEVEADTATDKAAEAEAAEAADEAAEDK) form a disordered region. The span at 137 to 149 (KKAEAEAAEAKAE) shows a compositional bias: basic and acidic residues. 2 stretches are compositionally biased toward acidic residues: residues 150 to 161 (EAEEAPEVEADT) and 170 to 182 (EAAE…AEDK).

It belongs to the bacterial ribosomal protein bL17 family. In terms of assembly, part of the 50S ribosomal subunit. Contacts protein L32.

The sequence is that of Large ribosomal subunit protein bL17 from Corynebacterium jeikeium (strain K411).